A 507-amino-acid polypeptide reads, in one-letter code: Maturase K (507 aa).

The protein belongs to the intron maturase 2 family. MatK subfamily.

Its subcellular location is the plastid. It localises to the chloroplast. Its function is as follows. Usually encoded in the trnK tRNA gene intron. Probably assists in splicing its own and other chloroplast group II introns. This Magnolia champaca (Yellow jade orchid tree) protein is Maturase K.